We begin with the raw amino-acid sequence, 407 residues long: Guanine nucleotide-binding protein alpha-1 subunit (407 aa).

A lipid anchor (N-myristoyl glycine) is attached at glycine 2. Residue cysteine 3 is the site of S-palmitoyl cysteine attachment. The 335-residue stretch at 73-407 (NDIKVLLLGA…MSNNLQSLMF (335 aa)) folds into the G-alpha domain. Residues 76–89 (KVLLLGAGDSGKTT) form a G1 motif region. GTP is bound by residues aspartate 84, serine 85, glycine 86, lysine 87, threonine 88, threonine 89, aspartate 190, leucine 215, threonine 221, glycine 243, asparagine 309, lysine 310, aspartate 312, and alanine 380. Residue threonine 88 participates in Mg(2+) binding. Residues 213-221 (DILHCRIKT) are G2 motif. A Mg(2+)-binding site is contributed by threonine 221. The tract at residues 236–245 (YRFFDVGGQR) is G3 motif. The G4 motif stretch occupies residues 305–312 (ILFLNKLD). The tract at residues 378–383 (TTATDT) is G5 motif.

It belongs to the G-alpha family. G(q) subfamily. In terms of assembly, g proteins are composed of 3 units; alpha, beta and gamma. The alpha chain contains the guanine nucleotide binding site. Requires Mg(2+) as cofactor.

In terms of biological role, implicated in the mating and sporulation pathway. Probably coupled to mating-factor receptors. May act in concert with Ras1. The chain is Guanine nucleotide-binding protein alpha-1 subunit (gpa1) from Schizosaccharomyces pombe (strain 972 / ATCC 24843) (Fission yeast).